Consider the following 249-residue polypeptide: Adapter protein MecA (249 aa).

This sequence belongs to the MecA family. As to quaternary structure, homodimer.

Enables the recognition and targeting of unfolded and aggregated proteins to the ClpC protease or to other proteins involved in proteolysis. The protein is Adapter protein MecA of Streptococcus thermophilus (strain ATCC BAA-250 / LMG 18311).